A 361-amino-acid chain; its full sequence is Chorismate synthase (361 aa).

NADP(+)-binding residues include R48 and R54. FMN-binding positions include 125–127 (RSS), 238–239 (NA), G278, 293–297 (KPTSS), and R319.

This sequence belongs to the chorismate synthase family. Homotetramer. The cofactor is FMNH2.

The catalysed reaction is 5-O-(1-carboxyvinyl)-3-phosphoshikimate = chorismate + phosphate. It participates in metabolic intermediate biosynthesis; chorismate biosynthesis; chorismate from D-erythrose 4-phosphate and phosphoenolpyruvate: step 7/7. Functionally, catalyzes the anti-1,4-elimination of the C-3 phosphate and the C-6 proR hydrogen from 5-enolpyruvylshikimate-3-phosphate (EPSP) to yield chorismate, which is the branch point compound that serves as the starting substrate for the three terminal pathways of aromatic amino acid biosynthesis. This reaction introduces a second double bond into the aromatic ring system. The chain is Chorismate synthase from Shigella boydii serotype 18 (strain CDC 3083-94 / BS512).